Here is a 164-residue protein sequence, read N- to C-terminus: Cyclic pyranopterin monophosphate synthase (164 aa).

Substrate contacts are provided by residues 75–77 (MCH) and 116–117 (ME). Asp-131 is an active-site residue.

It belongs to the MoaC family. Homohexamer; trimer of dimers.

It catalyses the reaction (8S)-3',8-cyclo-7,8-dihydroguanosine 5'-triphosphate = cyclic pyranopterin phosphate + diphosphate. It functions in the pathway cofactor biosynthesis; molybdopterin biosynthesis. In terms of biological role, catalyzes the conversion of (8S)-3',8-cyclo-7,8-dihydroguanosine 5'-triphosphate to cyclic pyranopterin monophosphate (cPMP). The chain is Cyclic pyranopterin monophosphate synthase from Staphylococcus aureus (strain bovine RF122 / ET3-1).